The following is a 71-amino-acid chain: Heat-stable enterotoxin A (71 aa).

Residues 1-19 (MKKIVFVLVLMLSSFGAFG) form the signal peptide. A propeptide spanning residues 20–53 (QETVSGQFSDALSTPITAEVYKQACDPPLPPAEV) is cleaved from the precursor. Cystine bridges form between Cys59–Cys64, Cys60–Cys68, and Cys63–Cys71.

This sequence belongs to the heat-stable enterotoxin family.

It localises to the secreted. In terms of biological role, toxin which activates the particulate form of guanylate cyclase and increases cyclic GMP levels within the host intestinal epithelial cells. The sequence is that of Heat-stable enterotoxin A (ystA) from Yersinia enterocolitica.